Reading from the N-terminus, the 745-residue chain is MNILINKRIFLLVTLVGIQLNVTAKQNSSNSNREELLPIIVNTNDDSNKLPGRSVLKQKNIEQQQADNAANLINILPGVNMAGGFRPGGQTLNINGMGDAEDVRVQLDGATKSFEKYQQGSIFIEPELLRRVTVDKGNYSPQYGNGGFAGTVKFETKAARDFLQENQKIGGFLKYGNNSNNNQKTYSTALVLQNEQKNIDLLLFGSVRNAGDYKRPDNSKILFSKNNQKTGLIKVNWQISPEHLLTLSSVYGIHKGWEPFAAKRDILPKPSSGDIMRYGADIAWKRKLVYRDQKDKNYTLKYNYLPENNPWINLSTQFSYSKTTQNDTRPEKAPPVFLGTLGNQSWITYSDLTFDINNTSTFNIKSTRHELLFGLQWLKNTRNTLMYDKSKVKKEDYNYGYFQPYYMPSGRQYTQALYLQDQITWKNIIFSTGVRYDHINNIGQKNFAPQYNDISVGQNYSQKNYNGWSYYLGLKYDVNHYLSLFTNFSRTWRAPVIDEQYETQYKQSSGPVTATSLNLEKEMINQTRVGGIITLNHLFQENDVFQFRTTYFYNRGKNEIFKTRGVNCVGNAADTNHVCPKIIGNYRNLPGYVIQGAELEAYYQSTYLFGEITYSYVKGKRDTSPRNPWGKTSTWIAEIPPRKATTALGFNIPKYNFTAGWRAEFVRRQDRSPLSGDPEAKYWSLPASRGYSLHNLFLSWSPAKIKGMNIKITVDNLFNRAYNPYLGELASGTGRNIKFSLSQKF.

The first 24 residues, 1 to 24 (MNILINKRIFLLVTLVGIQLNVTA), serve as a signal peptide directing secretion. Positions 45–157 (DDSNKLPGRS…FAGTVKFETK (113 aa)) constitute a TBDR plug domain. Residues 168–745 (KIGGFLKYGN…NIKFSLSQKF (578 aa)) enclose the TBDR beta-barrel domain.

Belongs to the TonB-dependent receptor family.

Its subcellular location is the cell outer membrane. Its function is as follows. Heme receptor. The sequence is that of TonB-dependent heme receptor A (tdhA) from Haemophilus influenzae (strain 86-028NP).